The chain runs to 346 residues: Protein RecA (346 aa).

68-75 is an ATP binding site; that stretch reads GPESSGKT.

It belongs to the RecA family.

It localises to the cytoplasm. In terms of biological role, can catalyze the hydrolysis of ATP in the presence of single-stranded DNA, the ATP-dependent uptake of single-stranded DNA by duplex DNA, and the ATP-dependent hybridization of homologous single-stranded DNAs. It interacts with LexA causing its activation and leading to its autocatalytic cleavage. This is Protein RecA from Heliobacterium modesticaldum (strain ATCC 51547 / Ice1).